The primary structure comprises 108 residues: uncharacterized protein (108 aa).

The protein belongs to the baculoviridae 11 kDa protein family.

This is an uncharacterized protein from Orgyia pseudotsugata (Douglas-fir tussock moth).